A 358-amino-acid chain; its full sequence is DNA integrity scanning protein DisA (358 aa).

Residues 9-147 form the DAC domain; sequence KQDLSEILQF…ENMKYILKDI (139 aa). ATP contacts are provided by residues G76, L94, and 107–111; that span reads MRHRT.

This sequence belongs to the DisA family. In terms of assembly, homooctamer. Mg(2+) is required as a cofactor.

It carries out the reaction 2 ATP = 3',3'-c-di-AMP + 2 diphosphate. Its function is as follows. Participates in a DNA-damage check-point that is active prior to asymmetric division when DNA is damaged. DisA forms globular foci that rapidly scan along the chromosomes during sporulation, searching for lesions. When a lesion is present, DisA pauses at the lesion site. This triggers a cellular response that culminates in a temporary block in sporulation initiation. Functionally, also has diadenylate cyclase activity, catalyzing the condensation of 2 ATP molecules into cyclic di-AMP (c-di-AMP). c-di-AMP acts as a signaling molecule that couples DNA integrity with progression of sporulation. The rise in c-di-AMP level generated by DisA while scanning the chromosome, operates as a positive signal that advances sporulation; upon encountering a lesion, the DisA focus arrests at the damaged site and halts c-di-AMP synthesis. This Bacillus licheniformis (strain ATCC 14580 / DSM 13 / JCM 2505 / CCUG 7422 / NBRC 12200 / NCIMB 9375 / NCTC 10341 / NRRL NRS-1264 / Gibson 46) protein is DNA integrity scanning protein DisA.